The primary structure comprises 312 residues: Putative pyridoxal kinase BUD16 (312 aa).

Substrate is bound by residues S9, T44, and Y122. ATP-binding positions include 183–184 (TS) and 211–223 (RVPFIDSYFTGVG). D224 is a binding site for substrate.

This sequence belongs to the pyridoxine kinase family. A divalent metal cation serves as cofactor.

Its subcellular location is the cytoplasm. It is found in the nucleus. It carries out the reaction pyridoxal + ATP = pyridoxal 5'-phosphate + ADP + H(+). Its function is as follows. Required for synthesis of pyridoxal-5-phosphate from vitamin B6. Important for bud site selection. This is Putative pyridoxal kinase BUD16 (BUD16) from Saccharomyces cerevisiae (strain ATCC 204508 / S288c) (Baker's yeast).